Reading from the N-terminus, the 318-residue chain is Homoserine kinase (318 aa).

ATP is bound at residue 97–107; the sequence is PIGSGLGSSAC.

It belongs to the GHMP kinase family. Homoserine kinase subfamily.

The protein localises to the cytoplasm. It catalyses the reaction L-homoserine + ATP = O-phospho-L-homoserine + ADP + H(+). It participates in amino-acid biosynthesis; L-threonine biosynthesis; L-threonine from L-aspartate: step 4/5. Its function is as follows. Catalyzes the ATP-dependent phosphorylation of L-homoserine to L-homoserine phosphate. The chain is Homoserine kinase from Photobacterium profundum (strain SS9).